A 121-amino-acid chain; its full sequence is Large ribosomal subunit protein uL14c (121 aa).

Belongs to the universal ribosomal protein uL14 family. As to quaternary structure, part of the 50S ribosomal subunit.

It is found in the plastid. It localises to the apicoplast. Binds to 23S rRNA. The chain is Large ribosomal subunit protein uL14c (rpl14) from Toxoplasma gondii.